The primary structure comprises 238 residues: U2 small nuclear ribonucleoprotein A' (238 aa).

LRR repeat units follow at residues 53-74 (PTHI…SRRD), 75-95 (DIHT…RLLP), and 97-118 (NVQN…QRLR). Residues 132-170 (NQVCHLANYREHVLRLVPHLETLDFQNVTAEERKSAMSF) enclose the LRRCT domain. Residues 167–189 (AMSFPRQADGDTLGPVNTAIRDN) are disordered.

Belongs to the U2 small nuclear ribonucleoprotein A family. In terms of assembly, belongs to the CWC complex (or CEF1-associated complex), a spliceosome sub-complex reminiscent of a late-stage spliceosome composed of the U2, U5 and U6 snRNAs and at least BUD13, BUD31, BRR2, CDC40, CEF1, CLF1, CUS1, CWC2, CWC15, CWC21, CWC22, CWC23, CWC24, CWC25, CWC27, ECM2, HSH155, IST3, ISY1, LEA1, MSL1, NTC20, PRP8, PRP9, PRP11, PRP19, PRP21, PRP22, PRP45, PRP46, SLU7, SMB1, SMD1, SMD2, SMD3, SMX2, SMX3, SNT309, SNU114, SPP2, SYF1, SYF2, RSE1 and YJU2. Interacts with MSL1.

Its subcellular location is the nucleus. Involved in pre-mRNA splicing. Associates to U2 snRNA in a MSL1 dependent manner and is required for normal accumulation of U2 snRNA. Required for the spliceosome assembly and the efficient addition of U2 snRNP onto the pre-mRNA. This is U2 small nuclear ribonucleoprotein A' (LEA1) from Saccharomyces cerevisiae (strain ATCC 204508 / S288c) (Baker's yeast).